The chain runs to 246 residues: MSFIKKIFLSSRSSEDGLFFSKLEKILGFKPLNLTHFRRAFTHRSMNKLDEKGNPMNYERLEFMGDAMLGSVIAAHLFNMSPTGDEGYLTKMRSKIVSREHLNELGKDLNLIQFLESKVTLQNFGENIHGNLFEAFVGAIYLDRGFVYCEKFIHKKVIKPYVDIDKLEGKVISYKSLLIEWCQKEKRVFHYDIYEDEDAGKLKYFGVKLSIDGKVVAKARATSKKKAEEIASKRGYFVFQSEIDGK.

Residues F20–G145 form the RNase III domain. Residue E62 participates in Mg(2+) binding. D66 is a catalytic residue. Mg(2+)-binding residues include N131 and E134. E134 is a catalytic residue. One can recognise a DRBM domain in the interval S173–S241.

Belongs to the ribonuclease III family. As to quaternary structure, homodimer. Mg(2+) is required as a cofactor.

The protein resides in the cytoplasm. The catalysed reaction is Endonucleolytic cleavage to 5'-phosphomonoester.. Digests double-stranded RNA. Involved in the processing of primary rRNA transcript to yield the immediate precursors to the large and small rRNAs (23S and 16S). Processes some mRNAs, and tRNAs when they are encoded in the rRNA operon. Processes pre-crRNA and tracrRNA of type II CRISPR loci if present in the organism. The sequence is that of Ribonuclease 3 from Flavobacterium psychrophilum (strain ATCC 49511 / DSM 21280 / CIP 103535 / JIP02/86).